We begin with the raw amino-acid sequence, 28 residues long: Conotoxin Cal6.43b (28 aa).

3 cysteine pairs are disulfide-bonded: cysteine 3–cysteine 13, cysteine 7–cysteine 19, and cysteine 12–cysteine 25.

As to expression, expressed by the venom duct.

The protein localises to the secreted. Probable neurotoxin with unknown target. Possibly targets ion channels. This chain is Conotoxin Cal6.43b, found in Californiconus californicus (California cone).